The sequence spans 37 residues: Albumin-2 (37 aa).

The Hemopexin repeat unit spans residues 6–37 (IANFSVLNXEAYLFINDKYVLLDYAPGTXNDK).

In terms of assembly, dimer. As to expression, expressed in seeds (at protein level).

Its subcellular location is the cytoplasm. It is found in the cytosol. Its function is as follows. Binds hemin and thiamine. This is Albumin-2 from Lens culinaris (Lentil).